A 482-amino-acid chain; its full sequence is tRNA sulfurtransferase (482 aa).

Residues 61 to 165 (LAIRDALTRI…DDRLLLIKGR (105 aa)) enclose the THUMP domain. Residues 183–184 (LI), Lys-265, Gly-287, and Gln-296 contribute to the ATP site. Cysteines 344 and 456 form a disulfide. Residues 404–482 (FGPNDVILDI…GFNNVKVYRP (79 aa)) enclose the Rhodanese domain. Cys-456 serves as the catalytic Cysteine persulfide intermediate.

It belongs to the ThiI family.

The protein localises to the cytoplasm. It carries out the reaction [ThiI sulfur-carrier protein]-S-sulfanyl-L-cysteine + a uridine in tRNA + 2 reduced [2Fe-2S]-[ferredoxin] + ATP + H(+) = [ThiI sulfur-carrier protein]-L-cysteine + a 4-thiouridine in tRNA + 2 oxidized [2Fe-2S]-[ferredoxin] + AMP + diphosphate. It catalyses the reaction [ThiS sulfur-carrier protein]-C-terminal Gly-Gly-AMP + S-sulfanyl-L-cysteinyl-[cysteine desulfurase] + AH2 = [ThiS sulfur-carrier protein]-C-terminal-Gly-aminoethanethioate + L-cysteinyl-[cysteine desulfurase] + A + AMP + 2 H(+). It functions in the pathway cofactor biosynthesis; thiamine diphosphate biosynthesis. Catalyzes the ATP-dependent transfer of a sulfur to tRNA to produce 4-thiouridine in position 8 of tRNAs, which functions as a near-UV photosensor. Also catalyzes the transfer of sulfur to the sulfur carrier protein ThiS, forming ThiS-thiocarboxylate. This is a step in the synthesis of thiazole, in the thiamine biosynthesis pathway. The sulfur is donated as persulfide by IscS. The protein is tRNA sulfurtransferase of Escherichia coli O8 (strain IAI1).